The primary structure comprises 310 residues: Proline iminopeptidase (310 aa).

Residues 33-290 (PVIFLHGGPG…RVVQAGHRAF (258 aa)) form the AB hydrolase-1 domain. The Nucleophile role is filled by Ser107. The active site involves Asp260. Catalysis depends on His287, which acts as the Proton donor.

Belongs to the peptidase S33 family.

The protein localises to the cytoplasm. The catalysed reaction is Release of N-terminal proline from a peptide.. Functionally, specifically catalyzes the removal of N-terminal proline residues from peptides. The protein is Proline iminopeptidase (pip) of Neisseria meningitidis serogroup B (strain ATCC BAA-335 / MC58).